The chain runs to 296 residues: Protoheme IX farnesyltransferase (296 aa).

Transmembrane regions (helical) follow at residues 27–47 (IMYL…GTIH), 48–68 (PLIG…AGAL), 98–118 (ALEC…LTVN), 120–140 (VSAI…TMVL), 148–168 (IVIG…SVTG), 175–195 (LLLF…LSLL), 219–239 (HIMG…LYVA), 242–262 (VLYE…AYCL), and 274–294 (CMGL…AIAL).

This sequence belongs to the UbiA prenyltransferase family. Protoheme IX farnesyltransferase subfamily.

It is found in the cell inner membrane. The catalysed reaction is heme b + (2E,6E)-farnesyl diphosphate + H2O = Fe(II)-heme o + diphosphate. It participates in porphyrin-containing compound metabolism; heme O biosynthesis; heme O from protoheme: step 1/1. Converts heme B (protoheme IX) to heme O by substitution of the vinyl group on carbon 2 of heme B porphyrin ring with a hydroxyethyl farnesyl side group. This chain is Protoheme IX farnesyltransferase, found in Anaplasma phagocytophilum (strain HZ).